A 301-amino-acid polypeptide reads, in one-letter code: Protoheme IX farnesyltransferase 1 (301 aa).

9 helical membrane-spanning segments follow: residues 29–49 (VVAL…PTAV), 51–71 (VQPL…AAAL), 101–121 (ALIF…VLVN), 123–143 (LTAW…TAYL), 150–170 (NIVI…TAVT), 177–197 (ALLL…ALAI), 223–243 (CILL…LVGM), 244–264 (CGPM…YKAW), and 281–301 (FSIY…YLWS).

The protein belongs to the UbiA prenyltransferase family. Protoheme IX farnesyltransferase subfamily.

It is found in the cell inner membrane. It catalyses the reaction heme b + (2E,6E)-farnesyl diphosphate + H2O = Fe(II)-heme o + diphosphate. The protein operates within porphyrin-containing compound metabolism; heme O biosynthesis; heme O from protoheme: step 1/1. Converts heme B (protoheme IX) to heme O by substitution of the vinyl group on carbon 2 of heme B porphyrin ring with a hydroxyethyl farnesyl side group. The polypeptide is Protoheme IX farnesyltransferase 1 (Shewanella putrefaciens (strain CN-32 / ATCC BAA-453)).